The sequence spans 298 residues: Tyrosine recombinase XerD (298 aa).

Positions 3-88 (ALDHPLIDQF…GLRGFFRYLL (86 aa)) constitute a Core-binding (CB) domain. Residues 109 to 292 (PLPKSLSEAD…AKARLQQLHA (184 aa)) enclose the Tyr recombinase domain. Residues arginine 149, lysine 173, histidine 244, arginine 247, and histidine 270 contribute to the active site. Residue tyrosine 279 is the O-(3'-phospho-DNA)-tyrosine intermediate of the active site.

Belongs to the 'phage' integrase family. XerD subfamily. As to quaternary structure, forms a cyclic heterotetrameric complex composed of two molecules of XerC and two molecules of XerD.

It is found in the cytoplasm. Site-specific tyrosine recombinase, which acts by catalyzing the cutting and rejoining of the recombining DNA molecules. The XerC-XerD complex is essential to convert dimers of the bacterial chromosome into monomers to permit their segregation at cell division. It also contributes to the segregational stability of plasmids. In Pseudomonas putida (strain ATCC 47054 / DSM 6125 / CFBP 8728 / NCIMB 11950 / KT2440), this protein is Tyrosine recombinase XerD.